The primary structure comprises 630 residues: FAST kinase domain-containing protein 4 (630 aa).

The region spanning 560–618 (IAFLRWEFPNFNSRSKDLLGRFVLARRHVLAAGFLVVDVPYYEWLDLKSEWQKSAYLKD) is the RAP domain.

This sequence belongs to the FAST kinase family. Expression detected in spleen, testis, colon, heart, smooth muscle, kidney, brain, lung, liver, brown and white adipose tissue with highest expression in testis, heart, smooth muscle and brown adipose tissue.

Its subcellular location is the mitochondrion matrix. Its function is as follows. Plays a role in processing of mitochondrial RNA precursors and in stabilization of a subset of mature mitochondrial RNA species, such as MT-CO1, MT-CO2, MT-CYB, MT-CO3, MT-ND3, MT-ND5 and MT-ATP8/6. May play a role in cell cycle progression. The polypeptide is FAST kinase domain-containing protein 4 (Tbrg4) (Mus musculus (Mouse)).